The following is a 92-amino-acid chain: Defensin (92 aa).

Positions 1–20 are cleaved as a signal peptide; the sequence is MKFFVLVAIAFALLACVAQA. Residues 21–52 constitute a propeptide that is removed on maturation; sequence QPVSDVDPIPEDHVLVHEDAHQEVLQHSRQKR. 3 disulfide bridges follow: Cys55/Cys82, Cys68/Cys88, and Cys72/Cys90.

Belongs to the invertebrate defensin family. Type 1 subfamily. In terms of tissue distribution, hemolymph (at protein level).

The protein resides in the secreted. In terms of biological role, responsible for the anti Gram-positive activity of immune hemolymph. Expressed in the absence of immune challenge during metamorphosis. This is Defensin (Def) from Drosophila melanogaster (Fruit fly).